A 689-amino-acid polypeptide reads, in one-letter code: Protein asunder (689 aa).

Residues 521-550 adopt a coiled-coil conformation; sequence NGARLKLSKAKDQYRLLYRELEQLIQLNAT. Disordered regions lie at residues 578–619 and 662–689; these read GASL…SKRR and PDFGNKDKDTVASGASITPNVKEESVRS. A compositionally biased stretch (low complexity) spans 599–614; sequence SSGSASGSSNSNSLLK. Residues 613–619 carry the Nuclear localization signal (NLS) motif; sequence LKASKRR.

It belongs to the Integrator subunit 13 family. As to quaternary structure, belongs to the multiprotein complex Integrator, at least composed of IntS1, IntS2, IntS3, IntS4, omd/IntS5, IntS6, defl/IntS7, IntS8, IntS9, IntS10, IntS11, IntS12, asun/IntS13, IntS14 and IntS15. The core complex associates with protein phosphatase 2A subunits mts/PP2A and Pp2A-29B, to form the Integrator-PP2A (INTAC) complex. Phosphorylated.

It is found in the nucleus. Its subcellular location is the cytoplasm. It localises to the perinuclear region. Its function is as follows. Component of the integrator complex, a multiprotein complex that terminates RNA polymerase II (Pol II) transcription in the promoter-proximal region of genes. The integrator complex provides a quality checkpoint during transcription elongation by driving premature transcription termination of transcripts that are unfavorably configured for transcriptional elongation: the complex terminates transcription by (1) catalyzing dephosphorylation of the C-terminal domain (CTD) of Pol II subunit Polr2A/Rbp1 and Spt5, and (2) degrading the exiting nascent RNA transcript via endonuclease activity. The integrator complex is also involved in the 3'-end processing of the U7 snRNA, and also the spliceosomal snRNAs U1, U2, U4 and U5. The sequence is that of Protein asunder (asun) from Drosophila yakuba (Fruit fly).